The chain runs to 132 residues: UPF0102 protein Acid_2433 (132 aa).

It belongs to the UPF0102 family.

The polypeptide is UPF0102 protein Acid_2433 (Solibacter usitatus (strain Ellin6076)).